The chain runs to 178 residues: Inner membrane-spanning protein YciB (178 aa).

Transmembrane regions (helical) follow at residues 22–42, 50–70, 76–96, 121–141, and 149–169; these read IFVASGALIVASAIALAVSWL, MALFTFALVAIFGTLTIALHN, WKVTIIYGLFTLALLFSHWFM, IAWALFFLACGLANIYVAFWL, and FKVFGLSGLTLLFTLLSGIYI.

The protein belongs to the YciB family.

The protein resides in the cell inner membrane. Functionally, plays a role in cell envelope biogenesis, maintenance of cell envelope integrity and membrane homeostasis. This chain is Inner membrane-spanning protein YciB, found in Erwinia tasmaniensis (strain DSM 17950 / CFBP 7177 / CIP 109463 / NCPPB 4357 / Et1/99).